The chain runs to 1275 residues: Histone-lysine N-methyltransferase PRDM16 (1275 aa).

Residues 1–10 (MRSKARARKL) are compositionally biased toward basic residues. A disordered region spans residues 1 to 66 (MRSKARARKL…SEDFTPKEGS (66 aa)). Positions 82–211 (PDFELRESSI…PGEELLVHVK (130 aa)) constitute an SET domain. A C2H2-type 1; degenerate zinc finger spans residues 230 to 255 (FRCDECDELFQCRLDLRRHKKYACSS). 5 C2H2-type zinc fingers span residues 282–304 (HECK…MIVH), 310–332 (YKCD…QMSH), 338–361 (FECE…RSQH), 367–389 (HACP…KHIH), and 395–417 (FICE…KRMH). The C2H2-type 7; atypical zinc-finger motif lies at 424–446 (IKCKDCGQMFSTTSSLNKHRRFC). Disordered regions lie at residues 592–658 (VKNR…VPPG) and 789–838 (APKV…GVSE). Positions 610–625 (TTTGTDLDTTTGTGSD) are enriched in low complexity. Basic and acidic residues-rich tracts occupy residues 631 to 648 (DSDR…ESKP) and 821 to 835 (REPR…RKPG). Residues 680 to 1038 (EEQLLTASGA…KHEHEGAPVS (359 aa)) are interaction with CTBP1, CTBP2 and ZNF516. A mediates interaction with SKI and regulation of TGF-beta signaling region spans residues 740-1275 (PFTDRALAHN…SGAFNPINHL (536 aa)). C2H2-type zinc fingers lie at residues 951–973 (YTCR…LRTH), 979–1002 (YRCK…RNIH), and 1008–1030 (FKCH…LKKH). Disordered stretches follow at residues 1027 to 1065 (LKKH…HALL) and 1084 to 1169 (EMNQ…MGFD). Residues 1038 to 1058 (SQHSGVLTNHLGTSASSPTSE) are compositionally biased toward polar residues. The segment covering 1117 to 1133 (DVEEEEEEELEEEDDDS) has biased composition (acidic residues).

This sequence belongs to the PRDM16 family. In terms of assembly, interacts with CEBPA, CEBPB and CEBPD; the interaction is direct. Interacts with PPARG and PPARA; controls brown adipocytes. Interacts with CTBP1 and CTBP2; represses the expression of WAT-specific genes. Interacts with PPARGC1A and PPARGC1B; interaction with PPARGC1A or PPARGC1B activates the transcription of BAT-specific gene. Interacts with HDAC1, SKI and SMAD2; the interaction with SKI promotes the recruitment of SMAD3-HDAC1 complex on the promoter of TGF-beta target genes. Interacts with ZNF516; the interaction is direct and may play a role in the transcription of brown adipose tissue-specific gene. In terms of tissue distribution, enriched in BAT compared to WAT. Detected in heart, lung, kidney and brain. Expressed in nuclei of cardiomyocytes.

Its subcellular location is the nucleus. The protein resides in the cytoplasm. It catalyses the reaction L-lysyl(9)-[histone H3] + S-adenosyl-L-methionine = N(6)-methyl-L-lysyl(9)-[histone H3] + S-adenosyl-L-homocysteine + H(+). In terms of biological role, binds DNA and functions as a transcriptional regulator. Displays histone methyltransferase activity and monomethylates 'Lys-9' of histone H3 (H3K9me1) in vitro. Probably catalyzes the monomethylation of free histone H3 in the cytoplasm which is then transported to the nucleus and incorporated into nucleosomes where SUV39H methyltransferases use it as a substrate to catalyze histone H3 'Lys-9' trimethylation. Likely to be one of the primary histone methyltransferases along with MECOM/PRDM3 that direct cytoplasmic H3K9me1 methylation. Functions in the differentiation of brown adipose tissue (BAT) which is specialized in dissipating chemical energy in the form of heat in response to cold or excess feeding while white adipose tissue (WAT) is specialized in the storage of excess energy and the control of systemic metabolism. Together with CEBPB, regulates the differentiation of myoblastic precursors into brown adipose cells. Functions as a repressor of TGF-beta signaling. The chain is Histone-lysine N-methyltransferase PRDM16 from Mus musculus (Mouse).